A 498-amino-acid polypeptide reads, in one-letter code: Angiopoietin-1 (498 aa).

The N-terminal stretch at 1–15 (MTVFLSFAFLAAILT) is a signal peptide. Positions 81-119 (QKLQHLEHVMENYTQWLQKLENYIVENMKSEMAQIQQNA) form a coiled coil. 5 N-linked (GlcNAc...) asparagine glycosylation sites follow: asparagine 92, asparagine 122, asparagine 154, asparagine 243, and asparagine 295. A coiled-coil region spans residues 153–261 (LNQTSRLEIQ…LELMDTVHNL (109 aa)). The region spanning 277–497 (REEEKPFRDC…STTMMIRPLD (221 aa)) is the Fibrinogen C-terminal domain. Intrachain disulfides connect cysteine 286-cysteine 315 and cysteine 439-cysteine 452.

As to quaternary structure, homooligomer. Interacts with TEK/TIE2. Interacts with SVEP1/polydom. Interacts with THBD; this interaction significantly inhibits the generation of activated PC and TAFIa/CPB2 by the thrombin/thrombomodulin complex. Glycosylated.

The protein resides in the secreted. In terms of biological role, binds and activates TEK/TIE2 receptor by inducing its dimerization and tyrosine phosphorylation. Plays an important role in the regulation of angiogenesis, endothelial cell survival, proliferation, migration, adhesion and cell spreading, reorganization of the actin cytoskeleton, but also maintenance of vascular quiescence. Required for normal angiogenesis and heart development during embryogenesis. After birth, activates or inhibits angiogenesis, depending on the context. Inhibits angiogenesis and promotes vascular stability in quiescent vessels, where endothelial cells have tight contacts. In quiescent vessels, ANGPT1 oligomers recruit TEK to cell-cell contacts, forming complexes with TEK molecules from adjoining cells, and this leads to preferential activation of phosphatidylinositol 3-kinase and the AKT1 signaling cascades. In migrating endothelial cells that lack cell-cell adhesions, ANGT1 recruits TEK to contacts with the extracellular matrix, leading to the formation of focal adhesion complexes, activation of PTK2/FAK and of the downstream kinases MAPK1/ERK2 and MAPK3/ERK1, and ultimately to the stimulation of sprouting angiogenesis. Mediates blood vessel maturation/stability. Implicated in endothelial developmental processes later and distinct from that of VEGF. Appears to play a crucial role in mediating reciprocal interactions between the endothelium and surrounding matrix and mesenchyme. The chain is Angiopoietin-1 (ANGPT1) from Homo sapiens (Human).